A 343-amino-acid polypeptide reads, in one-letter code: Probable dual-specificity RNA methyltransferase RlmN (343 aa).

The Proton acceptor role is filled by Glu91. Residues 97–326 (HPDRITACIS…AEIRREKGTD (230 aa)) form the Radical SAM core domain. Cys104 and Cys331 are joined by a disulfide. Residues Cys111, Cys115, and Cys118 each contribute to the [4Fe-4S] cluster site. Residues 158–159 (GE), Ser190, 213–215 (SLH), and Asn289 contribute to the S-adenosyl-L-methionine site. The active-site S-methylcysteine intermediate is Cys331.

This sequence belongs to the radical SAM superfamily. RlmN family. [4Fe-4S] cluster is required as a cofactor.

It is found in the cytoplasm. It catalyses the reaction adenosine(2503) in 23S rRNA + 2 reduced [2Fe-2S]-[ferredoxin] + 2 S-adenosyl-L-methionine = 2-methyladenosine(2503) in 23S rRNA + 5'-deoxyadenosine + L-methionine + 2 oxidized [2Fe-2S]-[ferredoxin] + S-adenosyl-L-homocysteine. The enzyme catalyses adenosine(37) in tRNA + 2 reduced [2Fe-2S]-[ferredoxin] + 2 S-adenosyl-L-methionine = 2-methyladenosine(37) in tRNA + 5'-deoxyadenosine + L-methionine + 2 oxidized [2Fe-2S]-[ferredoxin] + S-adenosyl-L-homocysteine. Functionally, specifically methylates position 2 of adenine 2503 in 23S rRNA and position 2 of adenine 37 in tRNAs. The polypeptide is Probable dual-specificity RNA methyltransferase RlmN (Thermotoga maritima (strain ATCC 43589 / DSM 3109 / JCM 10099 / NBRC 100826 / MSB8)).